The following is a 459-amino-acid chain: Cyclooctatin synthase (459 aa).

Heme is bound at residue Cys-408.

The protein belongs to the cytochrome P450 family. Requires heme as cofactor.

It carries out the reaction cyclooctat-9-ene-5,7-diol + AH2 + O2 = cyclooctatin + A + H2O. Functionally, involved in the biosynthesis of cyclooctatin, a potent inhibitor of lysophospholipase. Catalyzes the hydroxylation of cyclooctat-9-ene-5,7-diol at C-18 to yield the final product, cyclooctatin. This Streptomyces melanosporofaciens protein is Cyclooctatin synthase.